A 164-amino-acid polypeptide reads, in one-letter code: Crossover junction endodeoxyribonuclease RuvC (164 aa).

Catalysis depends on residues aspartate 7, glutamate 67, and aspartate 140. The Mg(2+) site is built by aspartate 7, glutamate 67, and aspartate 140.

Belongs to the RuvC family. In terms of assembly, homodimer which binds Holliday junction (HJ) DNA. The HJ becomes 2-fold symmetrical on binding to RuvC with unstacked arms; it has a different conformation from HJ DNA in complex with RuvA. In the full resolvosome a probable DNA-RuvA(4)-RuvB(12)-RuvC(2) complex forms which resolves the HJ. Mg(2+) is required as a cofactor.

It localises to the cytoplasm. The enzyme catalyses Endonucleolytic cleavage at a junction such as a reciprocal single-stranded crossover between two homologous DNA duplexes (Holliday junction).. The RuvA-RuvB-RuvC complex processes Holliday junction (HJ) DNA during genetic recombination and DNA repair. Endonuclease that resolves HJ intermediates. Cleaves cruciform DNA by making single-stranded nicks across the HJ at symmetrical positions within the homologous arms, yielding a 5'-phosphate and a 3'-hydroxyl group; requires a central core of homology in the junction. The consensus cleavage sequence is 5'-(A/T)TT(C/G)-3'. Cleavage occurs on the 3'-side of the TT dinucleotide at the point of strand exchange. HJ branch migration catalyzed by RuvA-RuvB allows RuvC to scan DNA until it finds its consensus sequence, where it cleaves and resolves the cruciform DNA. This chain is Crossover junction endodeoxyribonuclease RuvC, found in Chloroflexus aggregans (strain MD-66 / DSM 9485).